The chain runs to 380 residues: Cytochrome b (380 aa).

A run of 4 helical transmembrane segments spans residues 33-53 (FGSL…FLAM), 77-98 (WLIR…YLHI), 113-133 (WNVG…GYVL), and 178-198 (FFAF…IHLI). His-83 and His-97 together coordinate heme b. Residues His-182 and His-196 each coordinate heme b. His-201 is an a ubiquinone binding site. 4 consecutive transmembrane segments (helical) span residues 226 to 246 (YKDL…ALFS), 288 to 308 (LGGV…PILH), 320 to 340 (FSQF…WIGG), and 347 to 367 (FVII…VMIP).

This sequence belongs to the cytochrome b family. As to quaternary structure, the cytochrome bc1 complex contains 3 respiratory subunits (MT-CYB, CYC1 and UQCRFS1), 2 core proteins (UQCRC1 and UQCRC2) and probably 6 low-molecular weight proteins. It depends on heme b as a cofactor.

The protein resides in the mitochondrion inner membrane. Component of the ubiquinol-cytochrome c reductase complex (complex III or cytochrome b-c1 complex) that is part of the mitochondrial respiratory chain. The b-c1 complex mediates electron transfer from ubiquinol to cytochrome c. Contributes to the generation of a proton gradient across the mitochondrial membrane that is then used for ATP synthesis. This is Cytochrome b (mt-cyb) from Paralichthys olivaceus (Bastard halibut).